A 404-amino-acid chain; its full sequence is Cysteine desulfurase IscS (404 aa).

Pyridoxal 5'-phosphate-binding positions include 73-74, Asn153, Gln181, and 201-203; these read AT and SAH. The residue at position 204 (Lys204) is an N6-(pyridoxal phosphate)lysine. Position 241 (Thr241) interacts with pyridoxal 5'-phosphate. Catalysis depends on Cys327, which acts as the Cysteine persulfide intermediate. [2Fe-2S] cluster is bound at residue Cys327.

This sequence belongs to the class-V pyridoxal-phosphate-dependent aminotransferase family. NifS/IscS subfamily. Homodimer. Forms a heterotetramer with IscU, interacts with other sulfur acceptors. Requires pyridoxal 5'-phosphate as cofactor.

The protein localises to the cytoplasm. It catalyses the reaction (sulfur carrier)-H + L-cysteine = (sulfur carrier)-SH + L-alanine. It participates in cofactor biosynthesis; iron-sulfur cluster biosynthesis. Master enzyme that delivers sulfur to a number of partners involved in Fe-S cluster assembly, tRNA modification or cofactor biosynthesis. Catalyzes the removal of elemental sulfur atoms from cysteine to produce alanine. Functions as a sulfur delivery protein for Fe-S cluster synthesis onto IscU, an Fe-S scaffold assembly protein, as well as other S acceptor proteins. This Anaeromyxobacter sp. (strain K) protein is Cysteine desulfurase IscS.